A 61-amino-acid polypeptide reads, in one-letter code: Large ribosomal subunit protein eL20 (61 aa).

This sequence belongs to the eukaryotic ribosomal protein eL20 family. In terms of assembly, part of the 50S ribosomal subunit. Binds 23S rRNA.

This Methanosarcina mazei (strain ATCC BAA-159 / DSM 3647 / Goe1 / Go1 / JCM 11833 / OCM 88) (Methanosarcina frisia) protein is Large ribosomal subunit protein eL20.